Reading from the N-terminus, the 339-residue chain is Anthranilate phosphoribosyltransferase (339 aa).

5-phospho-alpha-D-ribose 1-diphosphate is bound by residues glycine 80, 83-84 (GD), threonine 88, 90-93 (NIST), 108-116 (KHGNRSVSS), and serine 120. An anthranilate-binding site is contributed by glycine 80. Serine 92 is a binding site for Mg(2+). Position 111 (asparagine 111) interacts with anthranilate. Position 166 (arginine 166) interacts with anthranilate. The Mg(2+) site is built by aspartate 225 and glutamate 226.

Belongs to the anthranilate phosphoribosyltransferase family. Homodimer. Requires Mg(2+) as cofactor.

It catalyses the reaction N-(5-phospho-beta-D-ribosyl)anthranilate + diphosphate = 5-phospho-alpha-D-ribose 1-diphosphate + anthranilate. Its pathway is amino-acid biosynthesis; L-tryptophan biosynthesis; L-tryptophan from chorismate: step 2/5. In terms of biological role, catalyzes the transfer of the phosphoribosyl group of 5-phosphorylribose-1-pyrophosphate (PRPP) to anthranilate to yield N-(5'-phosphoribosyl)-anthranilate (PRA). In Alkaliphilus metalliredigens (strain QYMF), this protein is Anthranilate phosphoribosyltransferase.